A 198-amino-acid chain; its full sequence is MAKLYFNYSTMNAGKSTVLLQASHNYRERGMQTYLMTAAIDGRAGTGRIASRIGIGAEADIFTPRDDVFAMIRDRLGAGPVACVFVDEAQFLSPEQVWQLARVVDDLDVPVLAYGLRVDFQGKLFPGSATLLALADEMREVRTICKCGRKATMVIRQDASGRAITEGAQVQIGGNETYVSLCRKHWREATGDPGAKGH.

Residues 9–16 (STMNAGKS) and 87–90 (DEAQ) each bind ATP. The active-site Proton acceptor is glutamate 88. Zn(2+) is bound by residues cysteine 145, cysteine 147, cysteine 182, and histidine 185.

The protein belongs to the thymidine kinase family. As to quaternary structure, homotetramer.

The protein localises to the cytoplasm. It catalyses the reaction thymidine + ATP = dTMP + ADP + H(+). The chain is Thymidine kinase from Ruegeria pomeroyi (strain ATCC 700808 / DSM 15171 / DSS-3) (Silicibacter pomeroyi).